The sequence spans 562 residues: Glucose-6-phosphate isomerase (562 aa).

The active-site Proton donor is the Glu370. Catalysis depends on residues His401 and Lys526.

Belongs to the GPI family.

The protein resides in the cytoplasm. The catalysed reaction is alpha-D-glucose 6-phosphate = beta-D-fructose 6-phosphate. Its pathway is carbohydrate biosynthesis; gluconeogenesis. The protein operates within carbohydrate degradation; glycolysis; D-glyceraldehyde 3-phosphate and glycerone phosphate from D-glucose: step 2/4. In terms of biological role, catalyzes the reversible isomerization of glucose-6-phosphate to fructose-6-phosphate. In Deinococcus geothermalis (strain DSM 11300 / CIP 105573 / AG-3a), this protein is Glucose-6-phosphate isomerase.